The chain runs to 170 residues: MEFKNYIEIVEDWPKEGIKFKDITPLMADGKAFKSAVDEIVDYANTKEIDLVVGPEARGFIVGCPVSYALEVGFAPVRKEGKLPREVIKVDYGLEYGENVLTIHKDAIKPGQRVLITDDLLATGGTIEATIKLVEQLGGIVVGCAFLVELGYLDGKDKLEGYDVLTLMKY.

Belongs to the purine/pyrimidine phosphoribosyltransferase family. Homodimer.

The protein localises to the cytoplasm. The enzyme catalyses AMP + diphosphate = 5-phospho-alpha-D-ribose 1-diphosphate + adenine. The protein operates within purine metabolism; AMP biosynthesis via salvage pathway; AMP from adenine: step 1/1. Its function is as follows. Catalyzes a salvage reaction resulting in the formation of AMP, that is energically less costly than de novo synthesis. The sequence is that of Adenine phosphoribosyltransferase from Oceanobacillus iheyensis (strain DSM 14371 / CIP 107618 / JCM 11309 / KCTC 3954 / HTE831).